We begin with the raw amino-acid sequence, 383 residues long: Ribosomal RNA large subunit methyltransferase G (383 aa).

This sequence belongs to the methyltransferase superfamily. RlmG family.

Its subcellular location is the cytoplasm. It catalyses the reaction guanosine(1835) in 23S rRNA + S-adenosyl-L-methionine = N(2)-methylguanosine(1835) in 23S rRNA + S-adenosyl-L-homocysteine + H(+). Its function is as follows. Specifically methylates the guanine in position 1835 (m2G1835) of 23S rRNA. The sequence is that of Ribosomal RNA large subunit methyltransferase G from Shewanella denitrificans (strain OS217 / ATCC BAA-1090 / DSM 15013).